We begin with the raw amino-acid sequence, 442 residues long: Elongation factor 1-alpha (442 aa).

Positions 6 to 229 constitute a tr-type G domain; the sequence is KPHMNLIVIG…ALDNLKPPSV (224 aa). The G1 stretch occupies residues 15-22; sequence GHVDHGKS. GTP is bound at residue 15 to 22; sequence GHVDHGKS. A Mg(2+)-binding site is contributed by Ser-22. The tract at residues 71 to 75 is G2; sequence GVTID. Positions 92-95 are G3; it reads DAPG. GTP contacts are provided by residues 92 to 96 and 154 to 157; these read DAPGH and NKMD. The G4 stretch occupies residues 154–157; the sequence is NKMD. Residues 195 to 197 are G5; that stretch reads SAW.

It belongs to the TRAFAC class translation factor GTPase superfamily. Classic translation factor GTPase family. EF-Tu/EF-1A subfamily.

The protein resides in the cytoplasm. The enzyme catalyses GTP + H2O = GDP + phosphate + H(+). Its function is as follows. GTP hydrolase that promotes the GTP-dependent binding of aminoacyl-tRNA to the A-site of ribosomes during protein biosynthesis. The sequence is that of Elongation factor 1-alpha from Ignicoccus hospitalis (strain KIN4/I / DSM 18386 / JCM 14125).